Consider the following 447-residue polypeptide: BAG family molecular chaperone regulator 5 (447 aa).

BAG domains lie at 9 to 86 (SISR…EQNA), 95 to 167 (QNIF…EDCM), 182 to 260 (SVAK…DLEE), 275 to 350 (SILK…DLKE), and 365 to 442 (SHKA…DLKS).

In terms of assembly, binds to the ATPase domain of HSP/HSP70 chaperones. Binds PRKN. Interacts with HSPA8 and JPH2. Expressed in the heart.

Functionally, co-chaperone for HSP/HSP70 proteins. It functions as a nucleotide-exchange factor promoting the release of ADP from HSP70, thereby activating HSP70-mediated protein refolding. Has an essential role in maintaining proteostasis at junctional membrane complexes (JMC), where it may function as a scaffold between the HSPA8 chaperone and JMC proteins enabling correct, HSPA8-dependent JMC protein folding. Inhibits both auto-ubiquitination of PRKN and ubiquitination of target proteins by PRKN. The protein is BAG family molecular chaperone regulator 5 (BAG5) of Homo sapiens (Human).